The chain runs to 259 residues: Protein FAM220A (259 aa).

Disordered stretches follow at residues 1–44 (MRDR…ADAP) and 131–154 (LGGG…RVSR). The segment covering 138–152 (TDGHRGQCPKGEPRV) has biased composition (basic and acidic residues).

In terms of assembly, interacts with transcriptional activator STAT3; the interaction occurs in both the nucleus and the cytoplasm, is enhanced by IL6 and promotes STAT3 dephosphorylation, leading to negative regulation of STAT3 transcriptional activator activity. Can interact with both unphosphorylated and phosphorylated STAT3 but interacts preferentially with phosphorylated STAT3 in the nucleus. Interacts with protein phosphatase PTPN2/TC45; this promotes interaction of PTPN2 with STAT3, leading to dephosphorylation of STAT3 by PTPN2.

It localises to the nucleus. The protein resides in the cytoplasm. Its subcellular location is the cytoplasmic vesicle. The protein localises to the secretory vesicle. It is found in the acrosome. Its function is as follows. Promotes dephosphorylation of transcriptional activator STAT3 by interacting with both STAT3 and protein phosphatase PTPN2. This promotes interaction of PTPN2 with STAT3 and mediates STAT3 dephosphorylation by PTPN2, leading to negative regulation of STAT3 transcriptional activator activity. May be required for spermiogenesis or sperm function. In Homo sapiens (Human), this protein is Protein FAM220A.